The chain runs to 153 residues: Prostaglandin E synthase (153 aa).

Residues 1–13 lie on the Lumenal side of the membrane; sequence MPSPGLVMESGQV. Residues 14 to 42 form a helical membrane-spanning segment; sequence LPAFLLCSTLLVIKMYAVAVITGQMRLRK. R39 contributes to the glutathione binding site. Over 43 to 61 the chain is Cytoplasmic; that stretch reads KAFANPEDALKRGGLQYYR. The helical transmembrane segment at 62 to 91 threads the bilayer; sequence SDPDVERCLRAHRNDMETIYPFLFLGFVYS. 74–78 provides a ligand contact to glutathione; sequence RNDME. Residues 92 to 96 are Lumenal-facing; the sequence is FLGPN. A helical membrane pass occupies residues 97 to 120; that stretch reads PLIAWIHFLVVLTGRVVHTVAYLG. 2 residues coordinate glutathione: H114 and Y118. Residues 121–124 are Cytoplasmic-facing; it reads KLNP. Residues 125-153 traverse the membrane as a helical segment; that stretch reads RLRSGAYVLAQFSCFSMALQILWEVAHHL. Glutathione is bound at residue 127 to 131; it reads RSGAY.

The protein belongs to the MAPEG family. As to quaternary structure, homotrimer. The cofactor is glutathione.

The protein resides in the membrane. It is found in the cytoplasm. It localises to the perinuclear region. The enzyme catalyses prostaglandin H2 = prostaglandin E2. It catalyses the reaction 2-glyceryl-prostaglandin H2 = 2-glyceryl-prostaglandin E2. The catalysed reaction is prostaglandin G2 = (15S)-15-hydroperoxy-prostaglandin E2. It carries out the reaction 1-chloro-2,4-dinitrobenzene + glutathione = 2,4-dinitrophenyl-S-glutathione + chloride + H(+). The enzyme catalyses (5S)-hydroperoxy-(6E,8Z,11Z,14Z)-eicosatetraenoate + 2 glutathione = (5S)-hydroxy-(6E,8Z,11Z,14Z)-eicosatetraenoate + glutathione disulfide + H2O. It functions in the pathway lipid metabolism; prostaglandin biosynthesis. Activity is increased markedly in macrophages and osteoblasts following pro-inflammatory stimuli. Its function is as follows. Terminal enzyme of the cyclooxygenase (COX)-2-mediated prostaglandin E2 (PGE2) biosynthetic pathway. Catalyzes the glutathione-dependent oxidoreduction of prostaglandin endoperoxide H2 (PGH2) to prostaglandin E2 (PGE2) in response to inflammatory stimuli. Plays a key role in inflammation response, fever and pain. Also catalyzes the oxidoreduction of endocannabinoids into prostaglandin glycerol esters and PGG2 into 15-hydroperoxy-PGE2. In addition, displays low glutathione transferase and glutathione-dependent peroxidase activities, toward 1-chloro-2,4-dinitrobenzene and 5-hydroperoxyicosatetraenoic acid (5-HPETE), respectively. The chain is Prostaglandin E synthase (Ptges) from Mus musculus (Mouse).